Here is a 317-residue protein sequence, read N- to C-terminus: Ferrochelatase (317 aa).

2 residues coordinate Fe cation: H192 and E271.

Belongs to the ferrochelatase family.

The protein resides in the cytoplasm. It catalyses the reaction heme b + 2 H(+) = protoporphyrin IX + Fe(2+). It functions in the pathway porphyrin-containing compound metabolism; protoheme biosynthesis; protoheme from protoporphyrin-IX: step 1/1. Functionally, catalyzes the ferrous insertion into protoporphyrin IX. The chain is Ferrochelatase from Citrifermentans bemidjiense (strain ATCC BAA-1014 / DSM 16622 / JCM 12645 / Bem) (Geobacter bemidjiensis).